A 597-amino-acid polypeptide reads, in one-letter code: U3 small nucleolar RNA-associated protein 6 homolog (597 aa).

HAT repeat units follow at residues 121–153 (ATKT…WEME), 156–188 (LSSE…MELM), 304–335 (RKEE…FCLE), 488–520 (GGYK…FEKE), and 524–557 (CNMA…EELN).

It belongs to the UTP6 family. As to quaternary structure, part of the small subunit (SSU) processome, composed of more than 70 proteins and the RNA chaperone small nucleolar RNA (snoRNA) U3.

The protein localises to the nucleus. It localises to the nucleolus. Its function is as follows. Part of the small subunit (SSU) processome, first precursor of the small eukaryotic ribosomal subunit. During the assembly of the SSU processome in the nucleolus, many ribosome biogenesis factors, an RNA chaperone and ribosomal proteins associate with the nascent pre-rRNA and work in concert to generate RNA folding, modifications, rearrangements and cleavage as well as targeted degradation of pre-ribosomal RNA by the RNA exosome. Involved in nucleolar processing of pre-18S ribosomal RNA. The protein is U3 small nucleolar RNA-associated protein 6 homolog of Homo sapiens (Human).